We begin with the raw amino-acid sequence, 469 residues long: Sorting and assembly machinery component 50 homolog (469 aa).

In terms of domain architecture, POTRA spans 45–125 (VVVQHVHFDG…LDVTFEVTEL (81 aa)). Lys255 carries the N6-methyllysine modification.

This sequence belongs to the SAM50/omp85 family. In terms of assembly, associates with the mitochondrial contact site and cristae organizing system (MICOS) complex, composed of at least MICOS10/MIC10, CHCHD3/MIC19, CHCHD6/MIC25, APOOL/MIC27, IMMT/MIC60, APOO/MIC23/MIC26 and QIL1/MIC13. This complex was also known under the names MINOS or MitOS complex. The MICOS complex associates with mitochondrial outer membrane proteins SAMM50, MTX1 and MTX2 (together described as components of the mitochondrial outer membrane sorting assembly machinery (SAM) complex) and DNAJC11, mitochondrial inner membrane protein TMEM11 and with HSPA9. The MICOS and SAM complexes together with DNAJC11 are part of a large protein complex spanning both membranes termed the mitochondrial intermembrane space bridging (MIB) complex. Interacts with IMMT/MIC60. Interacts with CHCHD3/MIC19. Interacts with ARMC1. (Microbial infection) Interacts with parasite T.gondii RH strain MAF1b1; the interaction is probably indirect and results in the disruption of the MIB complex and the formation of SPOTs (structures positive for outer mitochondrial membrane (OMM)), a cellular response to OMM stress, which leads to the constitutive shedding of OMM vesicles.

Its subcellular location is the mitochondrion outer membrane. It localises to the cytoplasm. It is found in the mitochondrion. Plays a crucial role in the maintenance of the structure of mitochondrial cristae and the proper assembly of the mitochondrial respiratory chain complexes. Required for the assembly of TOMM40 into the TOM complex. This is Sorting and assembly machinery component 50 homolog (Samm50) from Mus musculus (Mouse).